A 244-amino-acid polypeptide reads, in one-letter code: Agamous-like MADS-box protein AGL13 (244 aa).

In terms of domain architecture, MADS-box spans 3-57; it reads RGKVEVKRIENKITRQVTFSKRKSGLLKKAYELSVLCDAEVSLIIFSTGGKLYEF. The K-box domain maps to 85 to 175; sequence TQGLRQEVTK…KLETEDHDFK (91 aa).

The protein resides in the nucleus. In terms of biological role, probable transcription factor. The sequence is that of Agamous-like MADS-box protein AGL13 (AGL13) from Arabidopsis thaliana (Mouse-ear cress).